The following is a 633-amino-acid chain: DNA-directed RNA polymerase subunit beta' (633 aa).

Zn(2+) is bound by residues Cys-72, Cys-74, Cys-87, and Cys-90. 3 residues coordinate Mg(2+): Asp-468, Asp-470, and Asp-472.

It belongs to the RNA polymerase beta' chain family. RpoC1 subfamily. In plastids the minimal PEP RNA polymerase catalytic core is composed of four subunits: alpha, beta, beta', and beta''. When a (nuclear-encoded) sigma factor is associated with the core the holoenzyme is formed, which can initiate transcription. It depends on Mg(2+) as a cofactor. The cofactor is Zn(2+).

Its subcellular location is the plastid. It is found in the chloroplast. It carries out the reaction RNA(n) + a ribonucleoside 5'-triphosphate = RNA(n+1) + diphosphate. In terms of biological role, DNA-dependent RNA polymerase catalyzes the transcription of DNA into RNA using the four ribonucleoside triphosphates as substrates. The sequence is that of DNA-directed RNA polymerase subunit beta' from Cyanidium caldarium (Red alga).